A 466-amino-acid polypeptide reads, in one-letter code: Asparagine--tRNA ligase (466 aa).

It belongs to the class-II aminoacyl-tRNA synthetase family. In terms of assembly, homodimer.

The protein resides in the cytoplasm. The catalysed reaction is tRNA(Asn) + L-asparagine + ATP = L-asparaginyl-tRNA(Asn) + AMP + diphosphate + H(+). The protein is Asparagine--tRNA ligase of Syntrophobacter fumaroxidans (strain DSM 10017 / MPOB).